A 168-amino-acid polypeptide reads, in one-letter code: Signal peptidase complex catalytic subunit SEC11 (168 aa).

The Cytoplasmic portion of the chain corresponds to 1-12 (MNLRLELTRFLN). A helical; Signal-anchor for type II membrane protein transmembrane segment spans residues 13–30 (LCFALASAFMFWKGLSIV). The Lumenal segment spans residues 31 to 168 (TNSHSPIVVV…IALSALLSNE (138 aa)). Active-site charge relay system residues include S44, H83, and D110. The C-terminal short (CTS) helix stretch occupies residues 154–165 (GLMGLIALSALL).

Belongs to the peptidase S26B family. In terms of assembly, component of the signal peptidase complex (SPC) composed of a catalytic subunit SEC11 and three accessory subunits SPC1, SPC2 and SPC3. The complex induces a local thinning of the ER membrane which is used to measure the length of the signal peptide (SP) h-region of protein substrates. This ensures the selectivity of the complex towards h-regions shorter than 18-20 amino acids. SPC associates with the translocon complex.

It localises to the endoplasmic reticulum membrane. The enzyme catalyses Cleavage of hydrophobic, N-terminal signal or leader sequences from secreted and periplasmic proteins.. Its function is as follows. Catalytic component of the signal peptidase complex (SPC) which catalyzes the cleavage of N-terminal signal sequences from nascent proteins as they are translocated into the lumen of the endoplasmic reticulum. Specifically cleaves N-terminal signal peptides that contain a hydrophobic alpha-helix (h-region) shorter than 18-20 amino acids. This Lachancea thermotolerans (strain ATCC 56472 / CBS 6340 / NRRL Y-8284) (Yeast) protein is Signal peptidase complex catalytic subunit SEC11 (SEC11).